The primary structure comprises 211 residues: ATP-dependent Clp protease proteolytic subunit (211 aa).

The active-site Nucleophile is Ser107. His132 is a catalytic residue.

The protein belongs to the peptidase S14 family. In terms of assembly, fourteen ClpP subunits assemble into 2 heptameric rings which stack back to back to give a disk-like structure with a central cavity, resembling the structure of eukaryotic proteasomes.

It is found in the cytoplasm. The catalysed reaction is Hydrolysis of proteins to small peptides in the presence of ATP and magnesium. alpha-casein is the usual test substrate. In the absence of ATP, only oligopeptides shorter than five residues are hydrolyzed (such as succinyl-Leu-Tyr-|-NHMec, and Leu-Tyr-Leu-|-Tyr-Trp, in which cleavage of the -Tyr-|-Leu- and -Tyr-|-Trp bonds also occurs).. Functionally, cleaves peptides in various proteins in a process that requires ATP hydrolysis. Has a chymotrypsin-like activity. Plays a major role in the degradation of misfolded proteins. The protein is ATP-dependent Clp protease proteolytic subunit of Xanthobacter autotrophicus (strain ATCC BAA-1158 / Py2).